A 688-amino-acid polypeptide reads, in one-letter code: Elongation factor G (688 aa).

Positions 8–282 (EKTRNIGIIA…AIVDYLPAPC (275 aa)) constitute a tr-type G domain. GTP is bound by residues 17–24 (AHIDAGKT), 81–85 (DTPGH), and 135–138 (NKMD).

It belongs to the TRAFAC class translation factor GTPase superfamily. Classic translation factor GTPase family. EF-G/EF-2 subfamily.

The protein localises to the cytoplasm. Functionally, catalyzes the GTP-dependent ribosomal translocation step during translation elongation. During this step, the ribosome changes from the pre-translocational (PRE) to the post-translocational (POST) state as the newly formed A-site-bound peptidyl-tRNA and P-site-bound deacylated tRNA move to the P and E sites, respectively. Catalyzes the coordinated movement of the two tRNA molecules, the mRNA and conformational changes in the ribosome. This is Elongation factor G from Onion yellows phytoplasma (strain OY-M).